Here is an 805-residue protein sequence, read N- to C-terminus: Phenylalanine--tRNA ligase beta subunit (805 aa).

A tRNA-binding domain is found at 39–148 (APPFTGVVVA…AALRPGTDIR (110 aa)). Residues 399–474 (PVREPVRMRL…RVYGFERIPD (76 aa)) enclose the B5 domain. Mg(2+) is bound by residues D452, D458, E461, and E462. An FDX-ACB domain is found at 703–804 (SRQPAVVRDL…LVAAHNARQR (102 aa)).

It belongs to the phenylalanyl-tRNA synthetase beta subunit family. Type 1 subfamily. As to quaternary structure, tetramer of two alpha and two beta subunits. Mg(2+) serves as cofactor.

The protein localises to the cytoplasm. The catalysed reaction is tRNA(Phe) + L-phenylalanine + ATP = L-phenylalanyl-tRNA(Phe) + AMP + diphosphate + H(+). The sequence is that of Phenylalanine--tRNA ligase beta subunit from Bordetella bronchiseptica (strain ATCC BAA-588 / NCTC 13252 / RB50) (Alcaligenes bronchisepticus).